A 151-amino-acid polypeptide reads, in one-letter code: Ubiquitin-conjugating enzyme E2-17 kDa (151 aa).

The region spanning 4–150 (PARRRLMRDF…VKACVEQSFI (147 aa)) is the UBC core domain. C88 acts as the Glycyl thioester intermediate in catalysis.

The protein belongs to the ubiquitin-conjugating enzyme family.

The protein resides in the nucleus. The enzyme catalyses S-ubiquitinyl-[E1 ubiquitin-activating enzyme]-L-cysteine + [E2 ubiquitin-conjugating enzyme]-L-cysteine = [E1 ubiquitin-activating enzyme]-L-cysteine + S-ubiquitinyl-[E2 ubiquitin-conjugating enzyme]-L-cysteine.. It functions in the pathway protein modification; protein ubiquitination. In terms of biological role, E2 ubiquitin-conjugating enzyme that accepts ubiquitin from the ubiquitin-activating enzyme E1 and transfers it to a E3 ubiquitin-protein ligase. Required for postreplication repair of UV-damaged DNA. Involved in the negative regulation of the Ras/MAPK signaling pathway in the wing by acting with the putative E3 ligases poe, Kcmf1 and Ufd4 to mediate the ubiquitination and proteasomal degradation of rl/MAPK. Required for in mitophagy. In Drosophila melanogaster (Fruit fly), this protein is Ubiquitin-conjugating enzyme E2-17 kDa.